The primary structure comprises 492 residues: Cytochrome P450 2A1 (492 aa).

Ser130 carries the post-translational modification Phosphoserine. Cys437 lines the heme pocket.

The protein belongs to the cytochrome P450 family. Heme serves as cofactor. As to expression, liver and testis.

Its subcellular location is the endoplasmic reticulum membrane. The protein localises to the microsome membrane. It carries out the reaction an organic molecule + reduced [NADPH--hemoprotein reductase] + O2 = an alcohol + oxidized [NADPH--hemoprotein reductase] + H2O + H(+). Highly active in the 7-alpha-hydroxylation of testosterone, progesterone and androstenedione. The protein is Cytochrome P450 2A1 (Cyp2a1) of Rattus norvegicus (Rat).